The chain runs to 425 residues: Histidine--tRNA ligase (425 aa).

The protein belongs to the class-II aminoacyl-tRNA synthetase family. As to quaternary structure, homodimer.

The protein localises to the cytoplasm. It carries out the reaction tRNA(His) + L-histidine + ATP = L-histidyl-tRNA(His) + AMP + diphosphate + H(+). The polypeptide is Histidine--tRNA ligase (Listeria innocua serovar 6a (strain ATCC BAA-680 / CLIP 11262)).